The primary structure comprises 508 residues: Steroid 17-alpha-hydroxylase/17,20 lyase (508 aa).

Asparagine 202 is a binding site for substrate. A heme-binding site is contributed by cysteine 442.

This sequence belongs to the cytochrome P450 family. Heme serves as cofactor.

The protein localises to the endoplasmic reticulum membrane. It localises to the microsome membrane. It carries out the reaction a C21-steroid + reduced [NADPH--hemoprotein reductase] + O2 = a 17alpha-hydroxy-C21-steroid + oxidized [NADPH--hemoprotein reductase] + H2O + H(+). The enzyme catalyses progesterone + reduced [NADPH--hemoprotein reductase] + O2 = 17alpha-hydroxyprogesterone + oxidized [NADPH--hemoprotein reductase] + H2O + H(+). It catalyses the reaction pregnenolone + reduced [NADPH--hemoprotein reductase] + O2 = 17alpha-hydroxypregnenolone + oxidized [NADPH--hemoprotein reductase] + H2O + H(+). The catalysed reaction is 17alpha-hydroxyprogesterone + reduced [NADPH--hemoprotein reductase] + O2 = androst-4-ene-3,17-dione + acetate + oxidized [NADPH--hemoprotein reductase] + H2O + 2 H(+). It carries out the reaction 17alpha-hydroxyprogesterone + reduced [NADPH--hemoprotein reductase] + O2 = 16alpha,17alpha-dihydroxyprogesterone + oxidized [NADPH--hemoprotein reductase] + H2O + H(+). The enzyme catalyses 16alpha,17alpha-dihydroxyprogesterone + reduced [NADPH--hemoprotein reductase] + O2 = 6beta,16alpha,17alpha-trihydroxyprogesterone + oxidized [NADPH--hemoprotein reductase] + H2O + H(+). It catalyses the reaction 17alpha-hydroxypregnenolone + reduced [NADPH--hemoprotein reductase] + O2 = 3beta-hydroxyandrost-5-en-17-one + acetate + oxidized [NADPH--hemoprotein reductase] + H2O + 2 H(+). The catalysed reaction is 16alpha,17alpha-dihydroxypregnenolone + reduced [NADPH--hemoprotein reductase] + O2 = 3beta,16alpha-dihydroxy-androst-5-en-17-one + acetate + oxidized [NADPH--hemoprotein reductase] + H2O + 2 H(+). It carries out the reaction 3beta-hydroxyandrost-5-en-17-one + reduced [NADPH--hemoprotein reductase] + O2 = 3beta,16alpha-dihydroxy-androst-5-en-17-one + oxidized [NADPH--hemoprotein reductase] + H2O + H(+). The enzyme catalyses androst-4-ene-3,17-dione + reduced [NADPH--hemoprotein reductase] + O2 = 16alpha-hydroxyandrost-4-ene-3,17-dione + oxidized [NADPH--hemoprotein reductase] + H2O + H(+). It functions in the pathway steroid hormone biosynthesis. The protein operates within steroid biosynthesis; glucocorticoid biosynthesis. With respect to regulation, regulated predominantly by intracellular cAMP levels. The 17,20-lyase activity is stimulated by cytochrome b5, which acts as an allosteric effector increasing the Vmax of the lyase activity. A cytochrome P450 monooxygenase involved in corticoid and androgen biosynthesis. Catalyzes 17-alpha hydroxylation of C21 steroids, which is common for both pathways. A second oxidative step, required only for androgen synthesis, involves an acyl-carbon cleavage. The 17-alpha hydroxy intermediates, as part of adrenal glucocorticoids biosynthesis pathway, are precursors of cortisol. Hydroxylates steroid hormones, pregnenolone and progesterone to form 17-alpha hydroxy metabolites, followed by the cleavage of the C17-C20 bond to form C19 steroids, dehydroepiandrosterone (DHEA) and androstenedione. Has 16-alpha hydroxylase activity. Catalyzes 16-alpha hydroxylation of 17-alpha hydroxy pregnenolone, followed by the cleavage of the C17-C20 bond to form 16-alpha-hydroxy DHEA. Also 16-alpha hydroxylates androgens, relevant for estriol synthesis. Mechanistically, uses molecular oxygen inserting one oxygen atom into a substrate, and reducing the second into a water molecule, with two electrons provided by NADPH via cytochrome P450 reductase (CPR; NADPH-ferrihemoprotein reductase). This chain is Steroid 17-alpha-hydroxylase/17,20 lyase (CYP17A1), found in Felis catus (Cat).